Consider the following 401-residue polypeptide: Homoserine O-acetyltransferase (401 aa).

Residues 37 to 358 (NAVLVCHALT…HGHDAFLVEP (322 aa)) enclose the AB hydrolase-1 domain. Ser-146 functions as the Nucleophile in the catalytic mechanism. Residue Arg-215 participates in substrate binding. Active-site residues include Asp-318 and His-351. Asp-352 lines the substrate pocket.

This sequence belongs to the AB hydrolase superfamily. MetX family. Homodimer.

It localises to the cytoplasm. The enzyme catalyses L-homoserine + acetyl-CoA = O-acetyl-L-homoserine + CoA. It participates in amino-acid biosynthesis; L-methionine biosynthesis via de novo pathway; O-acetyl-L-homoserine from L-homoserine: step 1/1. Its function is as follows. Transfers an acetyl group from acetyl-CoA to L-homoserine, forming acetyl-L-homoserine. This chain is Homoserine O-acetyltransferase, found in Natronomonas pharaonis (strain ATCC 35678 / DSM 2160 / CIP 103997 / JCM 8858 / NBRC 14720 / NCIMB 2260 / Gabara) (Halobacterium pharaonis).